A 155-amino-acid polypeptide reads, in one-letter code: Molybdopterin synthase catalytic subunit 2 (155 aa).

Substrate contacts are provided by residues 101-102 (HR), Lys117, and 124-126 (KKE).

It belongs to the MoaE family. MOCS2B subfamily. In terms of assembly, heterotetramer; composed of 2 small (MOCS2A) and 2 large (MOCS2B) subunits.

The protein localises to the cytoplasm. The catalysed reaction is 2 [molybdopterin-synthase sulfur-carrier protein]-C-terminal-Gly-aminoethanethioate + cyclic pyranopterin phosphate + H2O = molybdopterin + 2 [molybdopterin-synthase sulfur-carrier protein]-C-terminal Gly-Gly + 2 H(+). It participates in cofactor biosynthesis; molybdopterin biosynthesis. Catalytic subunit of the molybdopterin synthase complex, a complex that catalyzes the conversion of precursor Z into molybdopterin. Acts by mediating the incorporation of 2 sulfur atoms from thiocarboxylated MOCS2A into precursor Z to generate a dithiolene group. The chain is Molybdopterin synthase catalytic subunit 2 from Aedes aegypti (Yellowfever mosquito).